Reading from the N-terminus, the 290-residue chain is MANQKGLHVVMMIITVWLLYAAPNIHGWGKEGHEIICKIAQTRLDETAAKAVKELLPESAEGDLSSLCLWADRVKFRYHWSSPLHYINTPDACSYQYNRDCKDESGEKGRCVAGAIYNYTTQLLSYKTAASSQSQYNLTEALLFVSHFMGDIHQPLHVSYASDKGGNTIEVHWYTRKANLHHIWDSNIIETAEADLYNSALEGMVDALKKNITTEWADQVKRWETCTKKTACPDIYASEGIQAACDWAYKGVTEGDTLEDEYFYSRLPIVYQRLAQGGVRLAATLNRIFG.

The signal sequence occupies residues Met1–Gly27. A divalent metal cation-binding residues include Trp28 and His33. Trp28 to His33 contributes to the substrate binding site. A disulfide bridge connects residues Cys37 and Cys68. A divalent metal cation is bound by residues Asp72 and His85. Residues Asp72–Phe76, His85–Asn88, and Ser94–Arg99 contribute to the substrate site. Intrachain disulfides connect Cys93-Cys245, Cys101-Cys111, and Cys226-Cys232. Asn118 and Tyr136 together coordinate substrate. Residue Asn118 is glycosylated (N-linked (GlcNAc...) asparagine). N-linked (GlcNAc...) asparagine glycosylation occurs at Asn137. The a divalent metal cation site is built by His147, Asp151, His157, His181, and Asp185. The substrate binding stretch occupies residues His147–Leu196. Asn211 carries N-linked (GlcNAc...) asparagine glycosylation. A propeptide spans Ala283 to Gly290 (removed in mature form).

The protein belongs to the nuclease type I family. In terms of assembly, monomer. Mn(2+) is required as a cofactor. Requires Ca(2+) as cofactor. The cofactor is Zn(2+). Post-translationally, N-glycosylation is required for enzymatic stability and activity.

The catalysed reaction is Endonucleolytic cleavage to 5'-phosphomononucleotide and 5'-phosphooligonucleotide end-products.. With respect to regulation, ssDNase activity is inhibited by the divalent cation chelator EDTA and the reducing agent DTT. Divalent metal ions (e.g. Ca(2+), Mg(2+) and Zn(2+)) and DTT represses RNase activity. RNase activity is enhanced by EDTA. Also repressed by vanadate (VO(4)(3-)) and phosphate (PO(4)(3-)) by occupying the active site. Its function is as follows. Endonuclease mostly active on RNA and ssDNA, and to a lower extent, on dsDNA. Can cleave mismatch regions in heteroduplex DNA containing single base pair mismatches or insertion/deletion bases. In contradiction with PubMed:22506810, cannot hydrolyze single-stranded DNA and does not cleave mismatches. This Arabidopsis thaliana (Mouse-ear cress) protein is Endonuclease 2.